The chain runs to 194 residues: Probable thymidylate kinase (194 aa).

8-15 (GIDGSGKT) is a binding site for ATP.

Belongs to the thymidylate kinase family.

The enzyme catalyses dTMP + ATP = dTDP + ADP. The polypeptide is Probable thymidylate kinase (Sulfolobus acidocaldarius (strain ATCC 33909 / DSM 639 / JCM 8929 / NBRC 15157 / NCIMB 11770)).